We begin with the raw amino-acid sequence, 490 residues long: UDP-N-acetylmuramate--L-alanine ligase (490 aa).

Position 130-136 (130-136) interacts with ATP; the sequence is GTHGKTT.

It belongs to the MurCDEF family.

The protein resides in the cytoplasm. It carries out the reaction UDP-N-acetyl-alpha-D-muramate + L-alanine + ATP = UDP-N-acetyl-alpha-D-muramoyl-L-alanine + ADP + phosphate + H(+). It participates in cell wall biogenesis; peptidoglycan biosynthesis. Cell wall formation. This Idiomarina loihiensis (strain ATCC BAA-735 / DSM 15497 / L2-TR) protein is UDP-N-acetylmuramate--L-alanine ligase.